The following is a 281-amino-acid chain: Transcription factor HES-1 (281 aa).

The interval 1-44 (MPADIMEKNSSSPVAATPASVNTTPDKPKTASEHRKSSKPIMEK) is disordered. Over residues 10–21 (SSSPVAATPASV) the composition is skewed to low complexity. The span at 26–35 (DKPKTASEHR) shows a compositional bias: basic and acidic residues. The 58-residue stretch at 34-91 (HRKSSKPIMEKRRRARINESLSQLKTLILDALKKDSSRHSKLEKADILEMTVKHLRNL) folds into the bHLH domain. The Orange domain maps to 110–143 (YRAGFSECMNEVTRFLSTCEGVNTEVRTRLLGHL). Disordered regions lie at residues 158 to 206 (QAHP…PCKL) and 255 to 281 (TSVGPNAVSPSSGSSLTADSMWRPWRN). Composition is skewed to pro residues over residues 164 to 174 (QAPPPPPPSGP) and 182 to 201 (FAPPPPLVPIPGGAAPPPGS). Residues 255-272 (TSVGPNAVSPSSGSSLTA) are compositionally biased toward polar residues. Positions 276-279 (WRPW) match the WRPW motif motif.

In terms of assembly, interacts with SIRT1. Interacts weakly with TLE2. Interacts with HES6. Transcription repression requires formation of a complex with a corepressor protein of the Groucho/TLE family. Interacts (via WPRW motif) with TLE1. Interacts with an FA complex, composed of FANCA, FANCF, FANCG and FANCL, but not of FANCC, nor FANCE. As to expression, present in all tissues examined but highest in epithelial cells and in mesoderm-derived tissues such as embryonal muscle cells.

It is found in the nucleus. In terms of biological role, transcriptional repressor of genes that require a bHLH protein for their transcription. May act as a negative regulator of myogenesis by inhibiting the functions of MYOD1 and ASH1. Binds DNA on N-box motifs: 5'-CACNAG-3' with high affinity and on E-box motifs: 5'-CANNTG-3' with low affinity. May play a role in a functional FA core complex response to DNA cross-link damage, being required for the stability and nuclear localization of FA core complex proteins, as well as for FANCD2 monoubiquitination in response to DNA damage. The polypeptide is Transcription factor HES-1 (Hes1) (Rattus norvegicus (Rat)).